Here is a 570-residue protein sequence, read N- to C-terminus: Probable metalloreductase AIM14 (570 aa).

7 helical membrane-spanning segments follow: residues 21 to 41, 70 to 90, 101 to 118, 142 to 162, 177 to 197, 204 to 224, and 230 to 250; these read IKYG…LALL, AIHL…HYSL, LGRL…LTLR, IITV…AIDD, FVGF…IGPM, LFYI…PIHS, and FPFL…RIVF. In terms of domain architecture, Ferric oxidoreductase spans 101–219; that stretch reads LGRLSYALIP…NLVNVAFILL (119 aa). Positions 250–388 constitute an FAD-binding FR-type domain; sequence FAKSLMILNK…GGSGISFALP (139 aa). The disordered stretch occupies residues 480–507; that stretch reads ISNFNSENADSNDKTPETSHSPTKENGS.

It belongs to the ferric reductase (FRE) family. AIM14 subfamily. Interacts with ribosomes.

It is found in the membrane. In terms of biological role, probable cell surface metalloreductase. May be involved in iron or copper homeostasis. The protein is Probable metalloreductase AIM14 (AIM14) of Saccharomyces cerevisiae (strain JAY291) (Baker's yeast).